A 382-amino-acid chain; its full sequence is Homoserine O-acetyltransferase (382 aa).

The region spanning 52–356 (NVVMVLHALT…TYGHDGFLVE (305 aa)) is the AB hydrolase-1 domain. The Nucleophile role is filled by serine 157. Arginine 227 contacts substrate. Active-site residues include aspartate 320 and histidine 350. Residue aspartate 351 coordinates substrate.

The protein belongs to the AB hydrolase superfamily. MetX family. Homodimer.

It localises to the cytoplasm. It carries out the reaction L-homoserine + acetyl-CoA = O-acetyl-L-homoserine + CoA. Its pathway is amino-acid biosynthesis; L-methionine biosynthesis via de novo pathway; O-acetyl-L-homoserine from L-homoserine: step 1/1. In terms of biological role, transfers an acetyl group from acetyl-CoA to L-homoserine, forming acetyl-L-homoserine. This chain is Homoserine O-acetyltransferase, found in Mycobacterium leprae (strain TN).